A 550-amino-acid polypeptide reads, in one-letter code: Alkaline phosphatase PhoV (550 aa).

A signal peptide spans 1-20 (MKIKLLCISLAVLFCSSANA). Residues Asp48 and Thr89 each contribute to the Zn(2+) site. Thr89 serves as the catalytic Phosphothreonine intermediate. Substrate-binding positions include Asn110 and 171-173 (KDR). Residues Asp313, His317, Asp360, His361, and His491 each coordinate Zn(2+).

The cofactor is Zn(2+).

It localises to the cell inner membrane. It carries out the reaction a phosphate monoester + H2O = an alcohol + phosphate. Subject to competitive inhibition by phosphate. Inhibited by manganese. Magnesium mildly increases enzyme activity when the zinc concentration is suboptimal. Optimal activity is dependent on the presence of 0.01-2% Triton X-100. Triton X-100 at a concentration of 0.05% increases the activity about fivefold relative to that in its absence. The enzyme is even active in Triton X-100 concentrations up to 80%. 50% inhibition by 4 mM EDTA and 50% inhibition by 48 mM sodium citrate. In terms of biological role, alkaline phosphatase with broad substrate specificity. The chain is Alkaline phosphatase PhoV from Synechococcus elongatus (strain ATCC 33912 / PCC 7942 / FACHB-805) (Anacystis nidulans R2).